The sequence spans 124 residues: Large ribosomal subunit protein bL12 (124 aa).

The protein belongs to the bacterial ribosomal protein bL12 family. As to quaternary structure, homodimer. Part of the ribosomal stalk of the 50S ribosomal subunit. Forms a multimeric L10(L12)X complex, where L10 forms an elongated spine to which 2 to 4 L12 dimers bind in a sequential fashion. Binds GTP-bound translation factors.

Its function is as follows. Forms part of the ribosomal stalk which helps the ribosome interact with GTP-bound translation factors. Is thus essential for accurate translation. This is Large ribosomal subunit protein bL12 from Cupriavidus necator (strain ATCC 17699 / DSM 428 / KCTC 22496 / NCIMB 10442 / H16 / Stanier 337) (Ralstonia eutropha).